Here is a 131-residue protein sequence, read N- to C-terminus: Probable ATP synthase subunit g 1, mitochondrial (131 aa).

It belongs to the ATPase g subunit family. In terms of assembly, subunit of the F-type ATPase which has 2 components, CF(1) - the catalytic core - and CF(0) - the membrane proton channel.

The protein resides in the mitochondrion membrane. Functionally, mitochondrial membrane ATP synthase (F(1)F(0) ATP synthase or Complex V) produces ATP from ADP in the presence of a proton gradient across the membrane which is generated by electron transport complexes of the respiratory chain. F-type ATPases consist of two structural domains, F(1) - containing the extramembraneous catalytic core, and F(0) - containing the membrane proton channel, linked together by a central stalk and a peripheral stalk. During catalysis, ATP synthesis in the catalytic domain of F(1) is coupled via a rotary mechanism of the central stalk subunits to proton translocation. Part of the complex F(0) domain. Minor subunit located with subunit a in the membrane. The chain is Probable ATP synthase subunit g 1, mitochondrial from Caenorhabditis elegans.